The following is an 88-amino-acid chain: U-scoloptoxin(12)-Sa1a (88 aa).

The first 20 residues, 1–20 (MKYMIITVVILFTCALKMFC), serve as a signal peptide directing secretion.

It belongs to the scoloptoxin-12 family. In terms of processing, contains 3 disulfide bonds. In terms of tissue distribution, expressed by the venom gland.

The protein localises to the secreted. The chain is U-scoloptoxin(12)-Sa1a from Scolopendra alternans (Florida Keys giant centipede).